We begin with the raw amino-acid sequence, 85 residues long: Large ribosomal subunit protein uL29 (85 aa).

It belongs to the universal ribosomal protein uL29 family.

The chain is Large ribosomal subunit protein uL29 from Thermobifida fusca (strain YX).